A 251-amino-acid polypeptide reads, in one-letter code: 5'-nucleotidase SurE (251 aa).

The a divalent metal cation site is built by D8, D9, S39, and N91.

The protein belongs to the SurE nucleotidase family. It depends on a divalent metal cation as a cofactor.

It localises to the cytoplasm. The catalysed reaction is a ribonucleoside 5'-phosphate + H2O = a ribonucleoside + phosphate. Its function is as follows. Nucleotidase that shows phosphatase activity on nucleoside 5'-monophosphates. This chain is 5'-nucleotidase SurE, found in Halorhodospira halophila (strain DSM 244 / SL1) (Ectothiorhodospira halophila (strain DSM 244 / SL1)).